The primary structure comprises 130 residues: Small ribosomal subunit protein uS8 (130 aa).

Belongs to the universal ribosomal protein uS8 family. As to quaternary structure, part of the 30S ribosomal subunit.

One of the primary rRNA binding proteins, it binds directly to 16S rRNA central domain where it helps coordinate assembly of the platform of the 30S subunit. The chain is Small ribosomal subunit protein uS8 from Cenarchaeum symbiosum (strain A).